Reading from the N-terminus, the 202-residue chain is Casparian strip membrane protein 1 (202 aa).

Over 1-42 (MEKNKSTAIEIAESSKESKGKAPLLAAAVGHDRAAGYKRGVS) the chain is Cytoplasmic. Residues 43-63 (IFDLFLRISAATAALAATIVM) form a helical membrane-spanning segment. Topologically, residues 64–90 (GTTEQTLPFFTQFFQFRAQYDDLPTFT) are extracellular. Residues 91–111 (FFVVGMAIVTGYLILSVPFSI) form a helical membrane-spanning segment. Residues 112 to 130 (VCIARPVAIGPRFLLIVGD) lie on the Cytoplasmic side of the membrane. Residues 131–151 (TLKAVLATSAAGSSAAIVYLA) traverse the membrane as a helical segment. At 152–173 (HNGNSDANWLDICQQFNDFCQR) the chain is on the extracellular side. A helical membrane pass occupies residues 174-194 (VSGAVVAAFVAVVLLIFLIVL). The Cytoplasmic segment spans residues 195–202 (SAMALRKN).

This sequence belongs to the Casparian strip membrane proteins (CASP) family. Homodimer and heterodimers.

It is found in the cell membrane. Its function is as follows. Regulates membrane-cell wall junctions and localized cell wall deposition. Required for establishment of the Casparian strip membrane domain (CSD) and the subsequent formation of Casparian strips, a cell wall modification of the root endodermis that determines an apoplastic barrier between the intraorganismal apoplasm and the extraorganismal apoplasm and prevents lateral diffusion. This chain is Casparian strip membrane protein 1, found in Striga hermonthica (Purple witchweed).